The following is a 420-amino-acid chain: Nucleobindin-2 (420 aa).

An N-terminal signal peptide occupies residues methionine 1 to alanine 24. The DNA-binding element occupies arginine 171 to proline 223. The tract at residues threonine 194–serine 225 is disordered. Residues lysine 213–threonine 420 are binds to necdin. 2 consecutive EF-hand domains span residues proline 241–lysine 276 and glutamate 293–leucine 328. Aspartate 254, asparagine 256, aspartate 258, glutamate 265, aspartate 306, asparagine 308, aspartate 310, and glutamate 317 together coordinate Ca(2+). The GBA signature appears at glutamate 304–glutamate 334. Residue serine 332 is modified to Phosphoserine. The segment covering aspartate 366 to lysine 386 has biased composition (basic and acidic residues). Residues aspartate 366–threonine 420 are disordered. Positions glutamine 387–leucine 396 are enriched in low complexity.

This sequence belongs to the nucleobindin family. Interacts (via GBA motif) with guanine nucleotide-binding protein G(i) alpha subunit GNAI3. Preferentially interacts with inactive rather than active GNAI3. Interaction with GNAI3 is inhibited when NUCB2 binds calcium, probably due to a conformational change which renders the GBA motif inaccessible. Binds to the postmitotic growth suppressor NDN; coexpression abolishes NUCB2 secretion. Interacts with MC4R.

It is found in the golgi apparatus. The protein resides in the endoplasmic reticulum. Its subcellular location is the nucleus envelope. It localises to the membrane. The protein localises to the cytoplasm. It is found in the secreted. In terms of biological role, calcium-binding protein which may have a role in calcium homeostasis. Acts as a non-receptor guanine nucleotide exchange factor which binds to and activates guanine nucleotide-binding protein (G-protein) alpha subunit GNAI3. Anorexigenic peptide, seems to play an important role in hypothalamic pathways regulating food intake and energy homeostasis, acting in a leptin-independent manner. May also exert hypertensive roles and modulate blood pressure through directly acting on peripheral arterial resistance. In intestinal epithelial cells, plays a role in the inhibition of hepatic glucose production via MC4R receptor leading to increased cyclic adenosine monophosphate (cAMP) levels and glucagon-like peptide 1 (GLP-1) secretion. This Rattus norvegicus (Rat) protein is Nucleobindin-2 (Nucb2).